We begin with the raw amino-acid sequence, 88 residues long: Large ribosomal subunit protein bL27 (88 aa).

Positions 1–23 are disordered; sequence MAHKKGTGSTRNGRDSNSKRLGV.

Belongs to the bacterial ribosomal protein bL27 family.

The sequence is that of Large ribosomal subunit protein bL27 from Synechococcus sp. (strain CC9902).